Reading from the N-terminus, the 129-residue chain is Small ribosomal subunit protein bS6 (129 aa).

Belongs to the bacterial ribosomal protein bS6 family.

In terms of biological role, binds together with bS18 to 16S ribosomal RNA. The sequence is that of Small ribosomal subunit protein bS6 from Microcystis aeruginosa (strain NIES-843 / IAM M-2473).